The sequence spans 178 residues: Large ribosomal subunit protein bL17 (178 aa).

The span at 126 to 139 (DRARRVAASKKAEE) shows a compositional bias: basic and acidic residues. Residues 126–178 (DRARRVAASKKAEEQAPAAEAEEQAPAAEAEAPAADAAAEAKADEAAEDKKDA) are disordered. Over residues 140–163 (QAPAAEAEEQAPAAEAEAPAADAA) the composition is skewed to low complexity. Residues 164 to 178 (AEAKADEAAEDKKDA) are compositionally biased toward basic and acidic residues.

Belongs to the bacterial ribosomal protein bL17 family. Part of the 50S ribosomal subunit. Contacts protein L32.

This chain is Large ribosomal subunit protein bL17, found in Nocardia farcinica (strain IFM 10152).